A 698-amino-acid polypeptide reads, in one-letter code: Potassium-transporting ATPase ATP-binding subunit (698 aa).

4 helical membrane-spanning segments follow: residues 56–76 (IMFV…VPSL), 82–102 (LWFN…ANFA), 240–260 (TVLI…PLFT), and 271–291 (ILVA…LSAI). The 4-aspartylphosphate intermediate role is filled by Asp324. ATP contacts are provided by residues Asp361, Glu365, 393-400 (FKAETRMS), and Lys412. Residues Asp535 and Asp539 each coordinate Mg(2+). Helical transmembrane passes span 605–625 (FAII…LNIM), 633–653 (AILS…PLAM), and 677–697 (GGVL…GLFI).

This sequence belongs to the cation transport ATPase (P-type) (TC 3.A.3) family. Type IA subfamily. As to quaternary structure, the system is composed of three essential subunits: KdpA, KdpB and KdpC.

The protein localises to the cell membrane. It catalyses the reaction K(+)(out) + ATP + H2O = K(+)(in) + ADP + phosphate + H(+). In terms of biological role, part of the high-affinity ATP-driven potassium transport (or Kdp) system, which catalyzes the hydrolysis of ATP coupled with the electrogenic transport of potassium into the cytoplasm. This subunit is responsible for energy coupling to the transport system and for the release of the potassium ions to the cytoplasm. This is Potassium-transporting ATPase ATP-binding subunit from Bacillus cytotoxicus (strain DSM 22905 / CIP 110041 / 391-98 / NVH 391-98).